Reading from the N-terminus, the 398-residue chain is Cytochrome b (398 aa).

The helical transmembrane segment at 45–65 (LGSIAGIALVIQIITGVILAM) threads the bilayer. Positions 95 and 109 each coordinate heme b. Helical transmembrane passes span 96-116 (AVGA…GLYY), 129-149 (IGII…VLPW), 164-184 (FSAI…GFSV), 192-212 (FFSL…LHLV), 245-265 (FVGF…EPNY), 277-297 (PLVT…YAIL), 304-324 (LGGV…PWLD), 339-359 (MAFW…GQPA), and 366-386 (ISRF…PLIG). Heme b-binding residues include His-196 and His-210.

The protein belongs to the cytochrome b family. The main subunits of complex b-c1 are: cytochrome b, cytochrome c1 and the Rieske protein. The cofactor is heme b.

It localises to the cell membrane. In terms of biological role, component of the ubiquinol-cytochrome c reductase complex (complex III or cytochrome b-c1 complex), which is a respiratory chain that generates an electrochemical potential coupled to ATP synthesis. In Rickettsia conorii (strain ATCC VR-613 / Malish 7), this protein is Cytochrome b (petB).